The following is a 1584-amino-acid chain: Cilia- and flagella-associated protein 74 (1584 aa).

Residues 300–379 adopt a coiled-coil conformation; it reads RKFQAWDRAK…EAEEEKRKKQ (80 aa). Residues 692 to 706 are compositionally biased toward polar residues; the sequence is SEQQLEGTESSQADM. A disordered region spans residues 692-739; it reads SEQQLEGTESSQADMQSRKELEKLDKEQEEEQPAEPERLTTVIPPSEE. A compositionally biased stretch (basic and acidic residues) spans 707 to 717; it reads QSRKELEKLDK.

Belongs to the CFAP74 family.

It is found in the cytoplasm. Its subcellular location is the cytoskeleton. It localises to the cilium axoneme. The protein localises to the flagellum axoneme. Functionally, as part of the central apparatus of the cilium axoneme may play a role in cilium movement. May play an important role in sperm architecture and function. This Homo sapiens (Human) protein is Cilia- and flagella-associated protein 74.